A 96-amino-acid chain; its full sequence is Prokineticin Bo8 (96 aa).

A signal peptide spans 1 to 19 (MKCFAQIVVLLLVIAFSHG). Intrachain disulfides connect cysteine 26–cysteine 38, cysteine 32–cysteine 50, cysteine 37–cysteine 78, cysteine 60–cysteine 86, and cysteine 80–cysteine 95.

Expressed by the skin glands.

It localises to the secreted. Its function is as follows. Potent agonist for both PKR1/PROKR1 and PKR2/PROKR2, and inducer of a potent and long-lasting hyperalgesia. Also potentiates capsaicin-induced TRPV1 current, when tested on DRG neurons. At subnanomolar concentrations, this protein both induces potent chemotaxis of macrophages and stimulates LPS-induced production of the pro-inflammatory cytokines IL-1 and IL-12. In vivo, potently stimulates the contraction of the guinea-pig gastrointestinal (GI) smooth muscle (nanomolar concentration). The chain is Prokineticin Bo8 from Bombina orientalis (Oriental fire-bellied toad).